A 359-amino-acid chain; its full sequence is Alanine racemase (359 aa).

The Proton acceptor; specific for D-alanine role is filled by lysine 34. Residue lysine 34 is modified to N6-(pyridoxal phosphate)lysine. Arginine 129 lines the substrate pocket. Residue tyrosine 254 is the Proton acceptor; specific for L-alanine of the active site. A substrate-binding site is contributed by methionine 302.

The protein belongs to the alanine racemase family. Pyridoxal 5'-phosphate serves as cofactor.

The enzyme catalyses L-alanine = D-alanine. It participates in amino-acid biosynthesis; D-alanine biosynthesis; D-alanine from L-alanine: step 1/1. Functionally, catalyzes the interconversion of L-alanine and D-alanine. May also act on other amino acids. This is Alanine racemase (alr) from Yersinia pestis.